The following is a 263-amino-acid chain: Proteasome subunit beta type-5 (263 aa).

Residues 1-59 constitute a propeptide, removed in mature form; the sequence is MALASVLERPLPVNQRGFFGLGGRADLLDLGPGSLSDGLSLAAPGWGVPEEPGIEMLHG. Threonine 60 serves as the catalytic Nucleophile. Alanine 108 contacts bortezomib.

This sequence belongs to the peptidase T1B family. In terms of assembly, the 26S proteasome consists of a 20S proteasome core and two 19S regulatory subunits. The 20S proteasome core is a barrel-shaped complex made of 28 subunits that are arranged in four stacked rings. The two outer rings are each formed by seven alpha subunits, and the two inner rings are formed by seven beta subunits. The proteolytic activity is exerted by three beta-subunits PSMB5, PSMB6 and PSMB7. Directly interacts with POMP. Interacts with ABCB1 and TAP1. (Microbial infection) Interacts with HIV-1 TAT protein.

The protein resides in the cytoplasm. It localises to the nucleus. The enzyme catalyses Cleavage of peptide bonds with very broad specificity.. Functionally, component of the 20S core proteasome complex involved in the proteolytic degradation of most intracellular proteins. This complex plays numerous essential roles within the cell by associating with different regulatory particles. Associated with two 19S regulatory particles, forms the 26S proteasome and thus participates in the ATP-dependent degradation of ubiquitinated proteins. The 26S proteasome plays a key role in the maintenance of protein homeostasis by removing misfolded or damaged proteins that could impair cellular functions, and by removing proteins whose functions are no longer required. Associated with the PA200 or PA28, the 20S proteasome mediates ubiquitin-independent protein degradation. This type of proteolysis is required in several pathways including spermatogenesis (20S-PA200 complex) or generation of a subset of MHC class I-presented antigenic peptides (20S-PA28 complex). Within the 20S core complex, PSMB5 displays a chymotrypsin-like activity. The polypeptide is Proteasome subunit beta type-5 (Homo sapiens (Human)).